Reading from the N-terminus, the 122-residue chain is NADPH-dependent 7-cyano-7-deazaguanine reductase (122 aa).

Residue cysteine 34 is the Thioimide intermediate of the active site. Aspartate 41 (proton donor) is an active-site residue. Substrate is bound by residues valine 56–leucine 58 and histidine 75–glutamate 76.

It belongs to the GTP cyclohydrolase I family. QueF type 1 subfamily.

It localises to the cytoplasm. It catalyses the reaction 7-aminomethyl-7-carbaguanine + 2 NADP(+) = 7-cyano-7-deazaguanine + 2 NADPH + 3 H(+). It participates in tRNA modification; tRNA-queuosine biosynthesis. Its function is as follows. Catalyzes the NADPH-dependent reduction of 7-cyano-7-deazaguanine (preQ0) to 7-aminomethyl-7-deazaguanine (preQ1). The sequence is that of NADPH-dependent 7-cyano-7-deazaguanine reductase from Anaeromyxobacter dehalogenans (strain 2CP-C).